We begin with the raw amino-acid sequence, 344 residues long: MALPVALQNDKENLRTLVVGGGSWGTALAILLARNRVPTLLWARDLAQVSAMIITRRNDRYLPQVPFPPSLEPITDLEGALSQTKQVLVAVPSCGFRPILERLAGHLSSHVPLIWATKGLEPGTGRLLHEVVLELLGSGWPMAVMSGPTFAHEVVAGLPTAVTVAATESEIATCFARSLHGDTFRVYTSDDLIGVQLGGAVKNVLAIAAGISDGLGFGANTRAALITRGLTELVRFALAWGGQRETLMGLSGLGDLVLTCTDDQSRNRRLGLALAQGKRLDEALTLIGQAVEGAAAAKVVVARAKQLAVEMPIAEQVYQVLYAGRHPRQAVEVLCRREQKPEYA.

S23, W24, R44, and K118 together coordinate NADPH. 3 residues coordinate sn-glycerol 3-phosphate: K118, G147, and T149. A151 is an NADPH binding site. The sn-glycerol 3-phosphate site is built by K202, D255, S265, R266, and N267. The Proton acceptor role is filled by K202. R266 serves as a coordination point for NADPH. Residue E292 participates in NADPH binding.

The protein belongs to the NAD-dependent glycerol-3-phosphate dehydrogenase family.

It localises to the cytoplasm. It carries out the reaction sn-glycerol 3-phosphate + NAD(+) = dihydroxyacetone phosphate + NADH + H(+). It catalyses the reaction sn-glycerol 3-phosphate + NADP(+) = dihydroxyacetone phosphate + NADPH + H(+). It functions in the pathway membrane lipid metabolism; glycerophospholipid metabolism. Functionally, catalyzes the reduction of the glycolytic intermediate dihydroxyacetone phosphate (DHAP) to sn-glycerol 3-phosphate (G3P), the key precursor for phospholipid synthesis. The chain is Glycerol-3-phosphate dehydrogenase [NAD(P)+] from Nitrosococcus oceani (strain ATCC 19707 / BCRC 17464 / JCM 30415 / NCIMB 11848 / C-107).